We begin with the raw amino-acid sequence, 1315 residues long: Activating molecule in BECN1-regulated autophagy protein 1A (1315 aa).

WD repeat units lie at residues 50–89 (DSPR…CVHS), 92–132 (GHRR…ESWL), and 134–174 (ESNS…TVVK). 10 disordered regions span residues 294–322 (RVPS…ARTE), 342–409 (FSSV…QRTG), 426–463 (FQSP…SSSI), 502–526 (NNNM…NPPH), 545–610 (SRRW…DTGQ), 630–660 (VYRQ…DNDY), 681–736 (RDSV…PRNA), 985–1134 (HSDG…STGQ), 1181–1208 (GSQT…PESL), and 1286–1315 (LLSS…EYGR). A compositionally biased stretch (polar residues) spans 351–360 (NMRNHSSSSG). Basic and acidic residues predominate over residues 378–388 (PGREGGGRHPG). Polar residues-rich tracts occupy residues 394-409 (SGLN…QRTG) and 426-435 (FQSPVYTSAS). Polar residues-rich tracts occupy residues 552–581 (GQPS…QSNE) and 633–647 (QSAS…QGAL). A compositionally biased stretch (low complexity) spans 696–715 (RPLSSNPSSLSPSPVPNAES). Residues 716 to 725 (SEVDFEEFEE) show a composition bias toward acidic residues. A compositionally biased stretch (low complexity) spans 1009 to 1021 (PSSSRSGDRAGSS). Residues 1022–1031 (RTDRRSRRDI) are compositionally biased toward basic and acidic residues. The segment covering 1047–1060 (SVTSQGTQTQNQRL) has biased composition (polar residues). Short sequence motifs (TQT motif) lie at residues 1053-1055 (TQT) and 1065-1067 (TQT). Residues 1061 to 1072 (QHAETQTDRDLP) show a composition bias toward basic and acidic residues. Positions 1076 to 1090 (QQPSTSQGSQVTDAT) are enriched in polar residues. Over residues 1091-1103 (ESLDFETLPEDSG) the composition is skewed to acidic residues. Polar residues-rich tracts occupy residues 1125–1134 (SEPSTDSTGQ) and 1181–1193 (GSQT…NRTR). Residues 1286-1307 (LLSSSPSLSPVNNSNYSNSDSS) are compositionally biased toward low complexity.

Belongs to the WD repeat AMBRA1 family. Component of the DCX(AMBRA1) E3 ubiquitin ligase complex.

The protein resides in the endoplasmic reticulum. It localises to the cytoplasm. The protein localises to the cytoskeleton. Its subcellular location is the cytoplasmic vesicle. It is found in the autophagosome. The protein resides in the mitochondrion. It localises to the cytosol. The protein localises to the nucleus. Its subcellular location is the cell junction. It is found in the focal adhesion. It functions in the pathway protein modification; protein ubiquitination. Substrate-recognition component of a DCX (DDB1-CUL4-X-box) E3 ubiquitin-protein ligase complex involved in cell cycle control and autophagy. The DCX(AMBRA1) complex specifically mediates the polyubiquitination of target proteins. Acts as an upstream master regulator of the transition from G1 to S cell phase: ambra1a specifically recognizes and binds phosphorylated cyclin-D (ccnd1, ccnd2 and ccnd3), leading to cyclin-D ubiquitination by the DCX(AMBRA1) complex and subsequent degradation. Acts as a regulator of Cul5-RING (CRL5) E3 ubiquitin-protein ligase complexes by mediating ubiquitination and degradation of Elongin-C (eloc) component of CRL5 complexes. Acts as a key regulator of autophagy by modulating the BECN1-PIK3C3 complex: controls protein turnover during neuronal development, and regulates normal cell survival and proliferation. In normal conditions, ambra1a is tethered to the cytoskeleton via interaction with dyneins light chains. Upon autophagy induction, ambra1a is released from the cytoskeletal docking site to induce autophagosome nucleation by mediating ubiquitination of proteins involved in autophagy. Also acts as an activator of mitophagy. Required for skeletal muscle development. In Danio rerio (Zebrafish), this protein is Activating molecule in BECN1-regulated autophagy protein 1A.